Here is a 1178-residue protein sequence, read N- to C-terminus: Dual specificity mitogen-activated protein kinase kinase hemipterous (1178 aa).

Disordered regions lie at residues 74 to 103 (SGSGISIAQRPAPPVPHATPFGSASASSSS) and 115 to 148 (ATGTFGGTYTPPTTRVSRATPTLPMLSSGPGGGL). Low complexity-rich tracts occupy residues 91-103 (ATPFGSASASSSS) and 115-128 (ATGTFGGTYTPPTT). A Protein kinase domain is found at 197-456 (LKHLGDLGNG…YPELLAQPFI (260 aa)). ATP contacts are provided by residues 203–211 (LGNGTSGNV) and Lys226. The Proton acceptor role is filled by Asp320. The residue at position 348 (Ser348) is a Phosphoserine. Thr352 carries the post-translational modification Phosphothreonine. Positions 522 to 648 (TYAGQSPTNP…DESPKKESMF (127 aa)) are disordered. Positions 523–543 (YAGQSPTNPQKTIKPTQIPSY) are enriched in polar residues. Residues 544 to 570 (QQQQSQFFMQSATQLPQTTTTTPTATT) are compositionally biased toward low complexity. Gly residues predominate over residues 574–593 (GGSGNGNGRGNGSGGSGNGS). The segment covering 594 to 608 (GSSSSASPLSPPSAG) has biased composition (low complexity). The segment covering 636–646 (KYNDESPKKES) has biased composition (basic and acidic residues). 2 positions are modified to phosphoserine: Ser646 and Ser662. 6 disordered regions span residues 715-783 (TTTP…LQPG), 797-851 (QNQL…STCS), 912-933 (GTSPTLQSRSPEQQSDYGGNGN), 999-1026 (TSPVASSMDRDQEPVHPQPPAYRSVVNN), 1042-1108 (SSSS…NRGQ), and 1122-1178 (GQPP…TIDQ). The segment covering 724–734 (TENSQAYDSCD) has biased composition (polar residues). Composition is skewed to low complexity over residues 735 to 783 (SSSN…LQPG), 808 to 817 (RYQQQRQQPP), and 837 to 851 (THSTSSQSSTQSTCS). Polar residues predominate over residues 912–928 (GTSPTLQSRSPEQQSDY). The span at 1042-1055 (SSSSNTSQSTSPTT) shows a compositional bias: low complexity. Phosphoserine is present on residues Ser1150 and Ser1154. Over residues 1168-1178 (PQRRIYRTIDQ) the composition is skewed to basic and acidic residues.

The protein belongs to the protein kinase superfamily. STE Ser/Thr protein kinase family. MAP kinase kinase subfamily. Post-translationally, MAPKK is itself dependent on Ser/Thr phosphorylation for activity catalyzed by MAP kinase kinase kinases. Weakly autophosphorylated.

The enzyme catalyses L-seryl-[protein] + ATP = O-phospho-L-seryl-[protein] + ADP + H(+). It catalyses the reaction L-threonyl-[protein] + ATP = O-phospho-L-threonyl-[protein] + ADP + H(+). It carries out the reaction L-tyrosyl-[protein] + ATP = O-phospho-L-tyrosyl-[protein] + ADP + H(+). Its function is as follows. Required for the epithelial cell sheet movement called dorsal closure (DC), which allows establishment of the dorsal epidermis. Controls the expression in the dorsal epithelium edges of another dorsal closure gene, puckered (puc). Phosphorylates and activates the MAP kinase bsk; bsk signal transduction pathway mediates an immune response and morphogenesis. In Drosophila melanogaster (Fruit fly), this protein is Dual specificity mitogen-activated protein kinase kinase hemipterous (hep).